Reading from the N-terminus, the 117-residue chain is Large ribosomal subunit protein bL19 (117 aa).

Belongs to the bacterial ribosomal protein bL19 family.

In terms of biological role, this protein is located at the 30S-50S ribosomal subunit interface and may play a role in the structure and function of the aminoacyl-tRNA binding site. The protein is Large ribosomal subunit protein bL19 of Aliivibrio salmonicida (strain LFI1238) (Vibrio salmonicida (strain LFI1238)).